Here is a 176-residue protein sequence, read N- to C-terminus: Inner membrane-spanning protein YciB (176 aa).

Helical transmembrane passes span 3–23, 24–44, 49–69, 72–92, 121–141, and 149–169; these read FLFDLFPIILFFVAFKVWGIF, TATAVAIVATLAQVAWVAFRH, TMLWVSLGVIVVFGGATLVLH, KFIQWKPTVLYWLFAIGLLAA, VAWALFFAVLGVANLYVVHNF, and FKLFGTTGAMVVFIILQSLWL.

It belongs to the YciB family.

The protein localises to the cell inner membrane. Functionally, plays a role in cell envelope biogenesis, maintenance of cell envelope integrity and membrane homeostasis. The polypeptide is Inner membrane-spanning protein YciB (Burkholderia orbicola (strain MC0-3)).